A 208-amino-acid polypeptide reads, in one-letter code: Small ribosomal subunit protein eS8 (208 aa).

Residues 1–27 (MGISRDNWHKRRRTGGKRKPVHKKRKY) are disordered. Over residues 8-26 (WHKRRRTGGKRKPVHKKRK) the composition is skewed to basic residues.

This sequence belongs to the eukaryotic ribosomal protein eS8 family. In terms of assembly, component of the small ribosomal subunit. Identified in a IGF2BP1-dependent mRNP granule complex containing untranslated mRNAs. Part of the small subunit (SSU) processome, composed of more than 70 proteins and the RNA chaperone small nucleolar RNA (snoRNA) U3.

The protein resides in the cytoplasm. It is found in the membrane. Its subcellular location is the nucleus. The protein localises to the nucleolus. Component of the small ribosomal subunit. The ribosome is a large ribonucleoprotein complex responsible for the synthesis of proteins in the cell. Part of the small subunit (SSU) processome, first precursor of the small eukaryotic ribosomal subunit. During the assembly of the SSU processome in the nucleolus, many ribosome biogenesis factors, an RNA chaperone and ribosomal proteins associate with the nascent pre-rRNA and work in concert to generate RNA folding, modifications, rearrangements and cleavage as well as targeted degradation of pre-ribosomal RNA by the RNA exosome. This Danio rerio (Zebrafish) protein is Small ribosomal subunit protein eS8 (rps8).